The primary structure comprises 486 residues: Cardiolipin synthase A (486 aa).

The next 2 helical transmembrane spans lie at 3-23 (TFYT…IAGV) and 38-58 (MAWL…YLSF). PLD phosphodiesterase domains lie at 219-246 (MDLR…VDPR) and 399-426 (EGGL…DMRS). Active-site residues include H224, K226, D231, H404, K406, and D411.

This sequence belongs to the phospholipase D family. Cardiolipin synthase subfamily. ClsA sub-subfamily.

The protein localises to the cell inner membrane. It carries out the reaction 2 a 1,2-diacyl-sn-glycero-3-phospho-(1'-sn-glycerol) = a cardiolipin + glycerol. Its function is as follows. Catalyzes the reversible phosphatidyl group transfer from one phosphatidylglycerol molecule to another to form cardiolipin (CL) (diphosphatidylglycerol) and glycerol. The polypeptide is Cardiolipin synthase A (Escherichia fergusonii (strain ATCC 35469 / DSM 13698 / CCUG 18766 / IAM 14443 / JCM 21226 / LMG 7866 / NBRC 102419 / NCTC 12128 / CDC 0568-73)).